The following is a 171-amino-acid chain: Translationally-controlled tumor protein homolog (171 aa).

The TCTP domain occupies 1-171 (MIIYRDCISQ…FKDGLEMEKC (171 aa)).

The protein belongs to the TCTP family. Expressed by the venom gland.

Its subcellular location is the secreted. Functionally, venom protein that causes edema, enhances vascular permeability and is likely related to the inflammatory activity of the venom. The polypeptide is Translationally-controlled tumor protein homolog (Micrurus fulvius (Eastern coral snake)).